We begin with the raw amino-acid sequence, 719 residues long: Acyl-coenzyme A oxidase (719 aa).

The Microbody targeting signal signature appears at 716 to 719 (APKI).

It belongs to the acyl-CoA oxidase family. Requires FAD as cofactor.

The protein localises to the peroxisome. The catalysed reaction is a 2,3-saturated acyl-CoA + O2 = a (2E)-enoyl-CoA + H2O2. It participates in lipid metabolism; peroxisomal fatty acid beta-oxidation. This is Acyl-coenzyme A oxidase (POX1) from Komagataella pastoris (Yeast).